A 343-amino-acid chain; its full sequence is MNATPKQKKLISLSQFILEEQLKIPHASGEFSALLSHLVYAAKIVGREVRKAGLLDDILGATEDTNVQGETQMKLDQYADNAFNQSLKICGHLCVLASEEHEDIIPIPGGYNIGKYTMAIDPLDGSSNIDTNVSIGTIFSIHQRLEPNSKEPGNERDLLQKGHLQRCAGYIIYGSSTMLVLSTGKGVSGFTLDPSVGEFLLSHPNMQMPESGDIYSANEGNASYWSPEVQAYLQKIKSIEGGKKPKTARYIGSLVADFHRNLLKGGIFLYPNDTKSSKYPNGKLRLLYEAAPMAFIAEQAGGMAVTVKGERILDLTPKDLHERTTLIIGSKKEVEEFLTFVAK.

Mg(2+) contacts are provided by glutamate 99, aspartate 121, leucine 123, and aspartate 124. Residues 124 to 127 (DGSS), asparagine 218, tyrosine 250, and lysine 283 contribute to the substrate site. Position 289 (glutamate 289) interacts with Mg(2+).

This sequence belongs to the FBPase class 1 family. Homotetramer. The cofactor is Mg(2+).

The protein localises to the cytoplasm. It carries out the reaction beta-D-fructose 1,6-bisphosphate + H2O = beta-D-fructose 6-phosphate + phosphate. It participates in carbohydrate biosynthesis; gluconeogenesis. The sequence is that of Fructose-1,6-bisphosphatase class 1 from Leptospira biflexa serovar Patoc (strain Patoc 1 / Ames).